Here is an 82-residue protein sequence, read N- to C-terminus: MAAGSTGERPFFEIITSVRYWIIHAVTLPAIFIAGFLFVSTGLAYDAFGTPRPDTYFQASETKAPVVSQRFESKAQLDLRLK.

Residues 22 to 36 traverse the membrane as a helical segment; that stretch reads IIHAVTLPAIFIAGF. Residue histidine 24 coordinates heme.

The protein belongs to the PsbE/PsbF family. As to quaternary structure, heterodimer of an alpha subunit and a beta subunit. PSII is composed of 1 copy each of membrane proteins PsbA, PsbB, PsbC, PsbD, PsbE, PsbF, PsbH, PsbI, PsbJ, PsbK, PsbL, PsbM, PsbT, PsbX, PsbY, Psb30/Ycf12, peripheral proteins PsbO, CyanoQ (PsbQ), PsbU, PsbV and a large number of cofactors. It forms dimeric complexes. Requires heme b as cofactor.

The protein resides in the cellular thylakoid membrane. Functionally, this b-type cytochrome is tightly associated with the reaction center of photosystem II (PSII). PSII is a light-driven water:plastoquinone oxidoreductase that uses light energy to abstract electrons from H(2)O, generating O(2) and a proton gradient subsequently used for ATP formation. It consists of a core antenna complex that captures photons, and an electron transfer chain that converts photonic excitation into a charge separation. This chain is Cytochrome b559 subunit alpha, found in Prochlorococcus marinus (strain SARG / CCMP1375 / SS120).